The following is a 242-amino-acid chain: MNSRKDKNSKGKNSDTKRKKSSQENDKAVVLLSGGLDSTTCLYQALADGKKIQALSFDYGQKHKIELSYAKKITRQLGISHTIQKLKPELFLGSSLTQKSLRVPKNSLGKEEIPNTYVPGRNILFLSFAVCLAEGTGSNSIYIGVNAMDYSGYPDCRPEFIKTYETAIQLGTKKGNQGSPIKIVTPLQNLSKKEIVLLGNRLQVPFHLTFSCYDPKNRKACGKCDACLLRKKGFQETGVSEK.

The segment at Met-1–Asn-25 is disordered. Leu-32–Leu-42 contributes to the ATP binding site. Cys-212, Cys-221, Cys-224, and Cys-227 together coordinate Zn(2+).

The protein belongs to the QueC family. Zn(2+) is required as a cofactor.

It catalyses the reaction 7-carboxy-7-deazaguanine + NH4(+) + ATP = 7-cyano-7-deazaguanine + ADP + phosphate + H2O + H(+). Its pathway is purine metabolism; 7-cyano-7-deazaguanine biosynthesis. Catalyzes the ATP-dependent conversion of 7-carboxy-7-deazaguanine (CDG) to 7-cyano-7-deazaguanine (preQ(0)). The polypeptide is 7-cyano-7-deazaguanine synthase (Leptospira borgpetersenii serovar Hardjo-bovis (strain JB197)).